A 100-amino-acid polypeptide reads, in one-letter code: Nucleoid-associated protein HPG27_32 (100 aa).

This sequence belongs to the YbaB/EbfC family. Homodimer.

Its subcellular location is the cytoplasm. The protein resides in the nucleoid. Functionally, binds to DNA and alters its conformation. May be involved in regulation of gene expression, nucleoid organization and DNA protection. The protein is Nucleoid-associated protein HPG27_32 of Helicobacter pylori (strain G27).